A 242-amino-acid chain; its full sequence is Transcription factor Spi-C (242 aa).

Residues 112 to 195 (LRLFEYLFES…IRRKLTYQFS (84 aa)) constitute a DNA-binding region (ETS).

The protein belongs to the ETS family. In terms of assembly, binds DNA as a monomer. In terms of tissue distribution, expressed in lymphoid tissues, including spleen, bone marrow and thymus. According to PubMed:19037245, highly expressed in red pulp macrophages and, at lower, levels in B-cells, but not in other cells, including, monocytes, dendritic cells and other tissue macrophages. According to PubMed:10464163 expressed in pre- and mature B-cells but not in immature B-cells; according to PubMed:10187812 not expressed in pre- but predominantly in mature B-cells and at lower levels in macrophages.

Its subcellular location is the nucleus. Controls the development of red pulp macrophages required for red blood cells recycling and iron homeostasis. Transcription factor that binds to the PU-box, a purine-rich DNA sequence (5'-GAGGA[AT]-3') that can act as a lymphoid-specific enhancer. Regulates VCAM1 gene expression. This is Transcription factor Spi-C (Spic) from Mus musculus (Mouse).